The chain runs to 152 residues: Regulatory protein RecX (152 aa).

It belongs to the RecX family.

The protein localises to the cytoplasm. Its function is as follows. Modulates RecA activity. The protein is Regulatory protein RecX of Chromohalobacter salexigens (strain ATCC BAA-138 / DSM 3043 / CIP 106854 / NCIMB 13768 / 1H11).